The primary structure comprises 347 residues: Protein RecA (347 aa).

An ATP-binding site is contributed by 67 to 74 (GPESSGKT).

This sequence belongs to the RecA family.

It is found in the cytoplasm. Can catalyze the hydrolysis of ATP in the presence of single-stranded DNA, the ATP-dependent uptake of single-stranded DNA by duplex DNA, and the ATP-dependent hybridization of homologous single-stranded DNAs. It interacts with LexA causing its activation and leading to its autocatalytic cleavage. The sequence is that of Protein RecA from Helicobacter acinonychis (strain Sheeba).